Reading from the N-terminus, the 358-residue chain is Fructose-bisphosphate aldolase 6, cytosolic (358 aa).

At Ser2 the chain carries N-acetylserine. Position 39 (Arg39) interacts with substrate. An S-glutathionyl cysteine; transient modification is found at Cys68. Cys173 carries the S-glutathionyl cysteine; transient; alternate modification. Cys173 carries the post-translational modification S-nitrosocysteine; transient; alternate. The Proton acceptor role is filled by Glu183. Lys225 (schiff-base intermediate with dihydroxyacetone-P) is an active-site residue. Substrate-binding positions include 266-268 and Arg298; that span reads SGG. Ser350 carries the post-translational modification Phosphoserine. Residue Lys354 is modified to N6,N6,N6-trimethyllysine.

The protein belongs to the class I fructose-bisphosphate aldolase family. In terms of assembly, homotetramer. Interacts with TRX1 and TRX3. Interacts with GAPC1 and VDAC3. In terms of processing, S-glutathionylated at Cys-68 and Cys-173. S-nitrosylated at Cys-173. In terms of tissue distribution, expressed in roots, rosettes leaves, cauline leaves, stems and flowers.

Its subcellular location is the cytoplasm. The protein localises to the cytosol. It is found in the nucleus. It localises to the mitochondrion. It carries out the reaction beta-D-fructose 1,6-bisphosphate = D-glyceraldehyde 3-phosphate + dihydroxyacetone phosphate. It functions in the pathway carbohydrate degradation; glycolysis; D-glyceraldehyde 3-phosphate and glycerone phosphate from D-glucose: step 4/4. With respect to regulation, total and irreversible inhibition by S-nitrosoglutathione (GSNO). Partial and reversible inhibition by oxidized glutathione (GSSG). Fructose-bisphosphate aldolase that plays a key role in glycolysis and gluconeogenesis. Associates with GAPC1 to the outer mitochondrial membrane, in a redox-dependent manner, leading to binding and bundling of actin. Actin binding and bundling occurs under oxidizing conditions and is reversible under reducing conditions. May be part of a redox-dependent retrograde signal transduction network for adaptation upon oxidative stress. The sequence is that of Fructose-bisphosphate aldolase 6, cytosolic from Arabidopsis thaliana (Mouse-ear cress).